The chain runs to 598 residues: UvrABC system protein C (598 aa).

In terms of domain architecture, GIY-YIG spans 13–92 (SSPGVYLMKD…IKKYQPRYNV (80 aa)). The UVR domain occupies 206–241 (DTTIANLEEAIKKASQEHKFEHAAALYRTLTLIRQT).

Belongs to the UvrC family. As to quaternary structure, interacts with UvrB in an incision complex.

It is found in the cytoplasm. Functionally, the UvrABC repair system catalyzes the recognition and processing of DNA lesions. UvrC both incises the 5' and 3' sides of the lesion. The N-terminal half is responsible for the 3' incision and the C-terminal half is responsible for the 5' incision. The protein is UvrABC system protein C of Chlamydia muridarum (strain MoPn / Nigg).